The sequence spans 599 residues: Zinc metalloproteinase dpy-31 (599 aa).

A signal peptide spans 1–22 (MALLKPFLSRTFSSFFATITGG). Residues 23 to 211 (RNLIDSIEEL…IQHGRRTKRK (189 aa)) constitute a propeptide that is removed on maturation. The region spanning 211-410 (KFIRSELRRW…IRLMNVIYCS (200 aa)) is the Peptidase M12A domain. The N-linked (GlcNAc...) asparagine glycan is linked to Asn-251. Intrachain disulfides connect Cys-254–Cys-409, Cys-277–Cys-298, Cys-413–Cys-433, Cys-435–Cys-444, and Cys-455–Cys-483. A Zn(2+)-binding site is contributed by His-306. Residue Glu-307 is part of the active site. 2 residues coordinate Zn(2+): His-310 and His-316. An EGF-like domain is found at 405–445 (NVIYCSDSCAQKLPCQRGGYTDPRRCGRCRCPDGFTGKLCE). Residues 455–571 (CGGRIELTSS…KGFQAQVRAL (117 aa)) form the CUB domain. Asn-522 carries an N-linked (GlcNAc...) asparagine glycan.

Zn(2+) serves as cofactor.

It is found in the secreted. With respect to regulation, inhibited by marimastat and tripeptide hydroxamic acids. Metalloprotease which cleaves the carboxyl terminus of procollagens to mature collagens. Probably involved in cuticular collagen maturation. The sequence is that of Zinc metalloproteinase dpy-31 from Brugia malayi (Filarial nematode worm).